A 442-amino-acid polypeptide reads, in one-letter code: Armadillo-like helical domain containing protein 1 (442 aa).

The chain is Armadillo-like helical domain containing protein 1 from Bos taurus (Bovine).